A 385-amino-acid chain; its full sequence is Lipid-A-disaccharide synthase (385 aa).

Belongs to the LpxB family.

It carries out the reaction a lipid X + a UDP-2-N,3-O-bis[(3R)-3-hydroxyacyl]-alpha-D-glucosamine = a lipid A disaccharide + UDP + H(+). It functions in the pathway bacterial outer membrane biogenesis; LPS lipid A biosynthesis. Condensation of UDP-2,3-diacylglucosamine and 2,3-diacylglucosamine-1-phosphate to form lipid A disaccharide, a precursor of lipid A, a phosphorylated glycolipid that anchors the lipopolysaccharide to the outer membrane of the cell. This chain is Lipid-A-disaccharide synthase, found in Rickettsia canadensis (strain McKiel).